Reading from the N-terminus, the 178-residue chain is Cytidylate kinase (178 aa).

7–15 (GLPGSGTTS) contributes to the ATP binding site.

Belongs to the cytidylate kinase family. Type 2 subfamily.

The protein resides in the cytoplasm. It carries out the reaction CMP + ATP = CDP + ADP. The catalysed reaction is dCMP + ATP = dCDP + ADP. The protein is Cytidylate kinase of Methanospirillum hungatei JF-1 (strain ATCC 27890 / DSM 864 / NBRC 100397 / JF-1).